The primary structure comprises 874 residues: Bifunctional uridylyltransferase/uridylyl-removing enzyme (874 aa).

The interval Met-1–Ile-332 is uridylyltransferase. A uridylyl-removing region spans residues Ile-333–Thr-692. Residues Val-451–Leu-573 enclose the HD domain. ACT domains lie at Glu-693–Asn-777 and Leu-800–Ala-874.

The protein belongs to the GlnD family. Mg(2+) is required as a cofactor.

It carries out the reaction [protein-PII]-L-tyrosine + UTP = [protein-PII]-uridylyl-L-tyrosine + diphosphate. The enzyme catalyses [protein-PII]-uridylyl-L-tyrosine + H2O = [protein-PII]-L-tyrosine + UMP + H(+). With respect to regulation, uridylyltransferase (UTase) activity is inhibited by glutamine, while glutamine activates uridylyl-removing (UR) activity. Its function is as follows. Modifies, by uridylylation and deuridylylation, the PII regulatory proteins (GlnB and homologs), in response to the nitrogen status of the cell that GlnD senses through the glutamine level. Under low glutamine levels, catalyzes the conversion of the PII proteins and UTP to PII-UMP and PPi, while under higher glutamine levels, GlnD hydrolyzes PII-UMP to PII and UMP (deuridylylation). Thus, controls uridylylation state and activity of the PII proteins, and plays an important role in the regulation of nitrogen assimilation and metabolism. The sequence is that of Bifunctional uridylyltransferase/uridylyl-removing enzyme from Vibrio campbellii (strain ATCC BAA-1116).